The following is a 155-amino-acid chain: Small ribosomal subunit protein uS7c (155 aa).

This sequence belongs to the universal ribosomal protein uS7 family. In terms of assembly, part of the 30S ribosomal subunit.

Its subcellular location is the plastid. It localises to the chloroplast. Functionally, one of the primary rRNA binding proteins, it binds directly to 16S rRNA where it nucleates assembly of the head domain of the 30S subunit. This is Small ribosomal subunit protein uS7c (rps7) from Cornus mas (Cornelian cherry dogwood).